The chain runs to 87 residues: Large ribosomal subunit protein bL27 (87 aa).

Polar residues predominate over residues Met-1 to Arg-11. Residues Met-1–Leu-21 are disordered.

Belongs to the bacterial ribosomal protein bL27 family.

This Hydrogenobaculum sp. (strain Y04AAS1) protein is Large ribosomal subunit protein bL27.